The sequence spans 533 residues: Probable bifunctional tRNA threonylcarbamoyladenosine biosynthesis protein (533 aa).

Residues 1–329 (MTRVLGIEGT…FRPDEVPVSW (329 aa)) are kae1. The Fe cation site is built by His-113 and His-117. L-threonylcarbamoyladenylate is bound by residues 134 to 138 (NASGA), Asp-166, Gly-179, Glu-183, and Asn-262. Asp-290 provides a ligand contact to Fe cation. A Protein kinase domain is found at 338-533 (PVPTDERRQG…REIETRGRYQ (196 aa)). Residues 345-352 (RQGAEAVV) and Lys-363 each bind ATP. Asp-452 serves as the catalytic Proton acceptor; for kinase activity.

It in the N-terminal section; belongs to the KAE1 / TsaD family. The protein in the C-terminal section; belongs to the protein kinase superfamily. Tyr protein kinase family. BUD32 subfamily. Component of the KEOPS complex that consists of Kae1, Bud32, Cgi121 and Pcc1; the whole complex dimerizes. It depends on Fe(2+) as a cofactor.

It localises to the cytoplasm. The enzyme catalyses L-seryl-[protein] + ATP = O-phospho-L-seryl-[protein] + ADP + H(+). It catalyses the reaction L-threonyl-[protein] + ATP = O-phospho-L-threonyl-[protein] + ADP + H(+). It carries out the reaction L-threonylcarbamoyladenylate + adenosine(37) in tRNA = N(6)-L-threonylcarbamoyladenosine(37) in tRNA + AMP + H(+). Functionally, required for the formation of a threonylcarbamoyl group on adenosine at position 37 (t(6)A37) in tRNAs that read codons beginning with adenine. Is a component of the KEOPS complex that is probably involved in the transfer of the threonylcarbamoyl moiety of threonylcarbamoyl-AMP (TC-AMP) to the N6 group of A37. The Kae1 domain likely plays a direct catalytic role in this reaction. The Bud32 domain probably displays kinase activity that regulates Kae1 function. In Natronomonas pharaonis (strain ATCC 35678 / DSM 2160 / CIP 103997 / JCM 8858 / NBRC 14720 / NCIMB 2260 / Gabara) (Halobacterium pharaonis), this protein is Probable bifunctional tRNA threonylcarbamoyladenosine biosynthesis protein.